A 246-amino-acid chain; its full sequence is DNA polymerase sliding clamp 3 (246 aa).

Belongs to the PCNA family. The subunits circularize to form a toroid; DNA passes through its center. Replication factor C (RFC) is required to load the toroid on the DNA. Forms dimeric complexes with PCNA1 and PCNA2, and trimeric complexes with PCNA123 and PCNA323; does not form homotrimers. Crystal structures show a heterotetramer of 2 PCNA2 and 2 PCNA3, which would be large enough to clamp a Holliday junction.

Sliding clamp subunit that acts as a moving platform for DNA processing. Responsible for tethering the catalytic subunit of DNA polymerase and other proteins to DNA during high-speed replication. Both trimeric complexes inhibit DNA ligase and both 3'-5' and 5'-3' activity of Hel308 (Hjm) helicase, but stimulate Hjc, the Holliday junction cleavage enzyme. The protein is DNA polymerase sliding clamp 3 of Sulfurisphaera tokodaii (strain DSM 16993 / JCM 10545 / NBRC 100140 / 7) (Sulfolobus tokodaii).